The chain runs to 226 residues: Pre-mRNA-splicing factor SPF27 (226 aa).

Position 2 is an N-acetylalanine (alanine 2). Serine 94 is modified (phosphoserine). A coiled-coil region spans residues 139–223 (YNENLVHMIE…HGEANKENIR (85 aa)).

It belongs to the SPF27 family. As to quaternary structure, component of the pre-catalytic and catalytic spliceosome complexes. Component of the postcatalytic spliceosome P complex. Component of the PRP19-CDC5L splicing complex composed of a core complex comprising a homotetramer of PRPF19, CDC5L, PLRG1 and BCAS2, and at least three less stably associated proteins CTNNBL1, CWC15 and HSPA8. Interacts directly in the complex with PRPF19, CDC5L and PLRG1.

It localises to the nucleus. It is found in the nucleolus. Required for pre-mRNA splicing as component of the activated spliceosome. Component of the PRP19-CDC5L complex that forms an integral part of the spliceosome and is required for activating pre-mRNA splicing. May have a scaffolding role in the spliceosome assembly as it contacts all other components of the core complex. The PRP19-CDC5L complex may also play a role in the response to DNA damage (DDR). The polypeptide is Pre-mRNA-splicing factor SPF27 (BCAS2) (Pongo abelii (Sumatran orangutan)).